The following is a 352-amino-acid chain: Uroporphyrinogen decarboxylase (352 aa).

Residues 27-31 (RQAGR), aspartate 77, tyrosine 154, threonine 209, and histidine 325 each bind substrate.

The protein belongs to the uroporphyrinogen decarboxylase family. Homodimer.

It is found in the cytoplasm. It catalyses the reaction uroporphyrinogen III + 4 H(+) = coproporphyrinogen III + 4 CO2. It functions in the pathway porphyrin-containing compound metabolism; protoporphyrin-IX biosynthesis; coproporphyrinogen-III from 5-aminolevulinate: step 4/4. Functionally, catalyzes the decarboxylation of four acetate groups of uroporphyrinogen-III to yield coproporphyrinogen-III. This is Uroporphyrinogen decarboxylase from Legionella pneumophila (strain Paris).